Reading from the N-terminus, the 401-residue chain is Voltage-gated potassium channel subunit beta-3 (401 aa).

Composition is skewed to polar residues over residues 1-14 (MQVS…TLRS) and 32-41 (GVSMAQTKQR). Positions 1 to 49 (MQVSFACTEQTLRSRTSEDRLCPSRPSGGQNGVSMAQTKQRTPPMGAKN) are disordered. NADP(+) is bound by residues threonine 90, tryptophan 91, glutamine 97, and aspartate 119. Residue tyrosine 124 is the Proton donor/acceptor of the active site. Asparagine 192, serine 222, arginine 223, glutamine 248, tryptophan 277, serine 278, proline 279, leucine 280, alanine 281, cysteine 282, lysine 288, arginine 298, glycine 357, serine 359, glutamine 363, glutamate 366, and asparagine 367 together coordinate NADP(+).

It belongs to the shaker potassium channel beta subunit family. Forms heteromultimeric complex with alpha subunits. Identified in potassium channel complexes containing KCNA1 and KCNA2.

It localises to the cytoplasm. Its function is as follows. Regulatory subunit of the voltage-gated potassium (Kv) channels composed of pore-forming and potassium-conducting alpha subunits and of regulatory beta subunit. The beta-3/KCNAB3 subunit may mediate closure of potassium channels. Increases and accelerates inactivation of Kv1.1/KCNA1 and Kv2.2/KCNA2 subunit-containing channels. May display nicotinamide adenine dinucleotide phosphate (NADPH)-dependent aldoketoreductase activity. The binding of oxidized and reduced NADP(H) cofactors may be required for the regulation of potassium channel activity. The chain is Voltage-gated potassium channel subunit beta-3 (kcnab3) from Xenopus laevis (African clawed frog).